The following is a 179-amino-acid chain: uncharacterized protein (179 aa).

The next 3 helical transmembrane spans lie at 29–49 (LLGI…GPLI), 76–96 (AKHM…DAYS), and 97–117 (GAII…LLWA).

The protein belongs to the DP1 family.

Its subcellular location is the membrane. This is an uncharacterized protein from Encephalitozoon cuniculi (strain GB-M1) (Microsporidian parasite).